Here is a 733-residue protein sequence, read N- to C-terminus: Cyclic nucleotide-gated channel (733 aa).

Disordered stretches follow at residues 1–33 and 67–95; these read MSTAEPAPDPTNPSTSGLAPTTNGIGSPPPTAS and PNGNSNAVQPAATGGQPASSDGGSAIEVP. Residues 1–125 are Cytoplasmic-facing; the sequence is MSTAEPAPDP…PSTDNFYYWT (125 aa). Residues 12–25 show a composition bias toward polar residues; the sequence is NPSTSGLAPTTNGI. The chain crosses the membrane as a helical span at residues 126–148; sequence CVVTVAYIYNLLFVIARQVFNDL. Topologically, residues 149 to 197 are extracellular; that stretch reads IGPSSQSLCRFYNGTLNSTTQVECTYNMLTNMKEMPTYSQYPDLGWSKY. Residues 198–217 traverse the membrane as a helical segment; it reads WHFRMLWVFFDLLMDCVYLI. The Cytoplasmic segment spans residues 218-251; sequence DTFLNYRMGYMDQGLVVREAEKVTKAYWQSKQYR. A helical membrane pass occupies residues 252 to 265; it reads IDGISLIPLDYILG. The Extracellular segment spans residues 266 to 276; sequence WPIPYINWRGL. Residues 277–287 traverse the membrane as a helical segment; sequence PILRLNRLIRY. The Cytoplasmic portion of the chain corresponds to 288 to 308; sequence KRVRNCLERTETRSSMPNAFR. The chain crosses the membrane as a helical span at residues 309 to 331; sequence VVVVVWYIVIIIHWNACLYFWIS. The Extracellular segment spans residues 332–362; it reads EWIGLGTDAWVYGHLNKQSLPDDITDTLLRR. Helical transmembrane passes span 363–385 and 386–411; these read YVYSFYWSTLILTTIGEVPSPVR and NIEYAFVTLDLMCGVLIFATIVGNVG. The interval 376–379 is selectivity filter; that stretch reads TIGE. Glu-379 provides a ligand contact to Na(+). The Cytoplasmic portion of the chain corresponds to 412–733; sequence SMISNMSAAR…TGTESESLLK (322 aa). The tract at residues 419 to 496 is C-linker; that stretch reads AARTEFQNKM…TLRKVRIFQD (78 aa). The segment at 493 to 607 is cyclic nucleotide-binding domain; the sequence is IFQDCEAGLL…ALREYPDARK (115 aa). Residue Gly-559 participates in 3',5'-cyclic GMP binding. Glu-560 lines the 3',5'-cyclic AMP pocket. 5 residues coordinate 3',5'-cyclic GMP: Ser-562, Arg-575, Thr-576, Lys-619, and Asp-620. Arg-575 contributes to the 3',5'-cyclic AMP binding site. The segment at 694–733 is disordered; sequence SIDGGDISTDGVDERVRPPRLRQTKTIDLPTGTESESLLK.

It belongs to the cyclic nucleotide-gated cation channel (TC 1.A.1.5) family. In terms of assembly, homotetramer. Expressed at the sensory endings of thermosensory, gustatory, and olfactory neurons.

The protein resides in the cell membrane. The protein localises to the cell projection. Its subcellular location is the cilium. It catalyses the reaction Ca(2+)(in) = Ca(2+)(out). It carries out the reaction Na(+)(in) = Na(+)(out). The catalysed reaction is K(+)(in) = K(+)(out). Pore-forming subunit of the cyclic nucleotide-gated channel. Required for normal thermosensation and chemosensation sensory behavior. Required, downstream of receptor-type guanylate cyclase gcy-9, for CO2-mediated responses in BAG neurons. Required, downstream of receptor-type guanylate cyclase gcy-14, for alkaline pH-mediated responses in ASE-left (ASEL) neurons. Involved in the development of ASJ sensory neuron axon during late larval stages and in the maintenance of normal axon morphology in the adult. Regulates dauer formation. Required for the calcium flux to the cytoplasm in the ASJ sensory neurons upon the onset and removal of a nitric oxide (NO) stimulus, thereby promoting the ASJ-mediated behavioral avoidance response to NO-producing organisms like P.aeruginosa. In ASI and ASJ sensory neurons, controls behavioral response to P.aeruginosa by up-regulating the transcription of daf-7, a member of the TGF-beta family. In AWB and AWC sensory neurons, mediates the recognition of food odors which subsequently allows for the detection of preferred food sources. In AWC neurons, acts to promote expression of srsx-3, a member of the GPCR family. Binding to cGMP results in conformational changes at the hydrophobic gate that converts the protein from an inactive closed state to an active open state. The sequence is that of Cyclic nucleotide-gated channel (tax-4) from Caenorhabditis elegans.